The sequence spans 150 residues: UPF0756 membrane protein HAPS_1649 (150 aa).

5 helical membrane-spanning segments follow: residues 1–21, 27–46, 52–72, 82–102, and 123–143; these read MSLQFNSVALLLVALILLGIF, VTISAAVLLIMQQTLLSKYV, YGIKIGIIILTIGVLAPLVSG, LINWKMIVAIIAGIVVAWLGG, and IIGVAFLKGVPVGPLIAAGIL.

This sequence belongs to the UPF0756 family.

It is found in the cell membrane. This chain is UPF0756 membrane protein HAPS_1649, found in Glaesserella parasuis serovar 5 (strain SH0165) (Haemophilus parasuis).